Consider the following 281-residue polypeptide: E3 ubiquitin-protein ligase MARCHF5 (281 aa).

The segment at Leu9–Val78 adopts an RING-CH-type zinc-finger fold. Cys17, Cys20, Cys36, Cys38, His46, Cys49, Cys68, and Cys71 together coordinate Zn(2+). 4 consecutive transmembrane segments (helical) span residues Phe102–Val122, Pro142–Ile162, Ile212–Ser232, and Thr241–Gln261.

It localises to the mitochondrion outer membrane. The protein resides in the endoplasmic reticulum membrane. It carries out the reaction S-ubiquitinyl-[E2 ubiquitin-conjugating enzyme]-L-cysteine + [acceptor protein]-L-lysine = [E2 ubiquitin-conjugating enzyme]-L-cysteine + N(6)-ubiquitinyl-[acceptor protein]-L-lysine.. It participates in protein modification; protein ubiquitination. Its function is as follows. Mitochondrial E3 ubiquitin-protein ligase that plays a crucial role in the control of mitochondrial morphology by acting as a positive regulator of mitochondrial fission. May play a role in the prevention of cell senescence acting as a regulator of mitochondrial quality control. In Gallus gallus (Chicken), this protein is E3 ubiquitin-protein ligase MARCHF5 (MARCHF5).